A 389-amino-acid chain; its full sequence is Carbamoyl phosphate synthase small chain (389 aa).

A CPSase region spans residues 1–197 (MMSSPAKAAK…AAKDASIGDD (197 aa)). Residues S51, G249, and G251 each contribute to the L-glutamine site. Residues 201–387 (HVVCMDFGMK…QEQLNEKCGV (187 aa)) enclose the Glutamine amidotransferase type-1 domain. The active-site Nucleophile is C276. The L-glutamine site is built by L277, Q280, N318, G320, and F321. Active-site residues include H360 and E362.

The protein belongs to the CarA family. As to quaternary structure, composed of two chains; the small (or glutamine) chain promotes the hydrolysis of glutamine to ammonia, which is used by the large (or ammonia) chain to synthesize carbamoyl phosphate. Tetramer of heterodimers (alpha,beta)4.

The catalysed reaction is hydrogencarbonate + L-glutamine + 2 ATP + H2O = carbamoyl phosphate + L-glutamate + 2 ADP + phosphate + 2 H(+). The enzyme catalyses L-glutamine + H2O = L-glutamate + NH4(+). Its pathway is amino-acid biosynthesis; L-arginine biosynthesis; carbamoyl phosphate from bicarbonate: step 1/1. The protein operates within pyrimidine metabolism; UMP biosynthesis via de novo pathway; (S)-dihydroorotate from bicarbonate: step 1/3. Small subunit of the glutamine-dependent carbamoyl phosphate synthetase (CPSase). CPSase catalyzes the formation of carbamoyl phosphate from the ammonia moiety of glutamine, carbonate, and phosphate donated by ATP, constituting the first step of 2 biosynthetic pathways, one leading to arginine and/or urea and the other to pyrimidine nucleotides. The small subunit (glutamine amidotransferase) binds and cleaves glutamine to supply the large subunit with the substrate ammonia. The chain is Carbamoyl phosphate synthase small chain from Rhodopirellula baltica (strain DSM 10527 / NCIMB 13988 / SH1).